The sequence spans 219 residues: Ribose-5-phosphate isomerase A (219 aa).

Substrate-binding positions include 28-31, 81-84, and 94-97; these read SGST, DGAD, and KGGG. Catalysis depends on E103, which acts as the Proton acceptor. Residue K121 participates in substrate binding.

This sequence belongs to the ribose 5-phosphate isomerase family. As to quaternary structure, homodimer.

It carries out the reaction aldehydo-D-ribose 5-phosphate = D-ribulose 5-phosphate. It participates in carbohydrate degradation; pentose phosphate pathway; D-ribose 5-phosphate from D-ribulose 5-phosphate (non-oxidative stage): step 1/1. Catalyzes the reversible conversion of ribose-5-phosphate to ribulose 5-phosphate. This chain is Ribose-5-phosphate isomerase A, found in Haemophilus influenzae (strain PittGG).